Reading from the N-terminus, the 316-residue chain is Probable cell division protein WhiA (316 aa).

Positions T275 to A309 form a DNA-binding region, H-T-H motif.

This sequence belongs to the WhiA family.

Involved in cell division and chromosome segregation. In Bacillus cereus (strain G9842), this protein is Probable cell division protein WhiA.